Consider the following 337-residue polypeptide: Probable poly [ADP-ribose] polymerase DDB_G0278045 (337 aa).

The region spanning 21 to 231 is the PARP catalytic domain; sequence KKWDIIYKQR…NNNKNKNKNN (211 aa). A compositionally biased stretch (low complexity) spans 218-242; that stretch reads NNTNNNNKNKNKNNNKNNNKNIKIQ. The disordered stretch occupies residues 218 to 247; sequence NNTNNNNKNKNKNNNKNNNKNIKIQNENKN.

It catalyses the reaction L-aspartyl-[protein] + NAD(+) = 4-O-(ADP-D-ribosyl)-L-aspartyl-[protein] + nicotinamide. The catalysed reaction is L-glutamyl-[protein] + NAD(+) = 5-O-(ADP-D-ribosyl)-L-glutamyl-[protein] + nicotinamide. The enzyme catalyses NAD(+) + (ADP-D-ribosyl)n-acceptor = nicotinamide + (ADP-D-ribosyl)n+1-acceptor + H(+).. This is Probable poly [ADP-ribose] polymerase DDB_G0278045 from Dictyostelium discoideum (Social amoeba).